Here is a 255-residue protein sequence, read N- to C-terminus: 3-oxoacyl-[acyl-carrier-protein] reductase MabA (255 aa).

NADP(+) is bound by residues 32 to 35, Arg-55, 69 to 70, Gly-98, Tyr-161, Lys-165, Ile-194, and Arg-205; these read NRGI and DV. The Proton acceptor role is filled by Tyr-161.

This sequence belongs to the short-chain dehydrogenases/reductases (SDR) family. In terms of assembly, homotetramer.

It localises to the secreted. Its subcellular location is the cell wall. It carries out the reaction a (3R)-hydroxyacyl-[ACP] + NADP(+) = a 3-oxoacyl-[ACP] + NADPH + H(+). The catalysed reaction is a (3R)-3-hydroxyacyl-CoA + NADP(+) = a 3-oxoacyl-CoA + NADPH + H(+). The enzyme catalyses (3R)-3-hydroxybutanoyl-CoA + NADP(+) = acetoacetyl-CoA + NADPH + H(+). It catalyses the reaction (3R)-hydroxyoctanoyl-CoA + NADP(+) = 3-oxooctanoyl-CoA + NADPH + H(+). The protein operates within lipid metabolism; mycolic acid biosynthesis. Its function is as follows. Part of the mycobacterial fatty acid elongation system FAS-II, which is involved in mycolic acid biosynthesis. Catalyzes the NADPH-dependent reduction of beta-ketoacyl derivatives, the second step of the FAS-II elongation cycle. Has a preference for longer substrates. Can use CoA derivatives as substrates in vitro. This is 3-oxoacyl-[acyl-carrier-protein] reductase MabA from Mycolicibacterium smegmatis (strain ATCC 700084 / mc(2)155) (Mycobacterium smegmatis).